Here is a 424-residue protein sequence, read N- to C-terminus: Tol-Pal system protein TolB (424 aa).

Positions 1–20 (MKQFIVFILSLYTTLSWAVL) are cleaved as a signal peptide.

This sequence belongs to the TolB family. As to quaternary structure, the Tol-Pal system is composed of five core proteins: the inner membrane proteins TolA, TolQ and TolR, the periplasmic protein TolB and the outer membrane protein Pal. They form a network linking the inner and outer membranes and the peptidoglycan layer.

It localises to the periplasm. Part of the Tol-Pal system, which plays a role in outer membrane invagination during cell division and is important for maintaining outer membrane integrity. This chain is Tol-Pal system protein TolB, found in Vesicomyosocius okutanii subsp. Calyptogena okutanii (strain HA).